Reading from the N-terminus, the 118-residue chain is UPF0344 protein YisL (118 aa).

Helical transmembrane passes span 4 to 24 (LHIT…SLYS), 33 to 53 (ITHM…AELF), 62 to 82 (EYAG…MLLI), and 93 to 113 (LWVG…HLPI).

Belongs to the UPF0344 family.

It is found in the cell membrane. In Bacillus subtilis (strain 168), this protein is UPF0344 protein YisL (yisL).